Reading from the N-terminus, the 529-residue chain is Beta-galactoside alpha-2,6-sialyltransferase 2 (529 aa).

Over 1–11 (MKPHLKQWRQR) the chain is Cytoplasmic. The helical; Signal-anchor for type II membrane protein transmembrane segment at 12–32 (MLFGIFAWGLLFLLIFIYFTD) threads the bilayer. Topologically, residues 33–529 (SNPAEPVPSS…PAPSPVIPHS (497 aa)) are lumenal. Residue serine 69 is glycosylated (O-linked (GalNAc...) serine). A glycan (N-linked (GlcNAc...) asparagine) is linked at asparagine 211. Cystine bridges form between cysteine 253/cysteine 519, cysteine 296/cysteine 448, and cysteine 466/cysteine 477.

This sequence belongs to the glycosyltransferase 29 family. In terms of processing, O-glycosylated. As to expression, weakly expressed in some tissues, such as small intestine, colon and fetal brain.

Its subcellular location is the golgi apparatus. It localises to the golgi stack membrane. The enzyme catalyses a beta-D-galactoside + CMP-N-acetyl-beta-neuraminate = an N-acetyl-alpha-neuraminyl-(2-&gt;6)-beta-D-galactosyl derivative + CMP + H(+). Its function is as follows. Transfers sialic acid from the donor of substrate CMP-sialic acid to galactose containing acceptor substrates. Has alpha-2,6-sialyltransferase activity toward oligosaccharides that have the Gal-beta-1,4-GlcNAc sequence at the non-reducing end of their carbohydrate groups, but it has weak or no activities toward glycoproteins and glycolipids. The polypeptide is Beta-galactoside alpha-2,6-sialyltransferase 2 (ST6GAL2) (Homo sapiens (Human)).